The chain runs to 423 residues: Serine--tRNA ligase (423 aa).

230-232 (TAE) is an L-serine binding site. 261–263 (RSE) serves as a coordination point for ATP. Glu284 is a binding site for L-serine. 348–351 (EISS) contacts ATP. Ser383 is an L-serine binding site.

Belongs to the class-II aminoacyl-tRNA synthetase family. Type-1 seryl-tRNA synthetase subfamily. In terms of assembly, homodimer. The tRNA molecule binds across the dimer.

The protein resides in the cytoplasm. It carries out the reaction tRNA(Ser) + L-serine + ATP = L-seryl-tRNA(Ser) + AMP + diphosphate + H(+). The catalysed reaction is tRNA(Sec) + L-serine + ATP = L-seryl-tRNA(Sec) + AMP + diphosphate + H(+). Its pathway is aminoacyl-tRNA biosynthesis; selenocysteinyl-tRNA(Sec) biosynthesis; L-seryl-tRNA(Sec) from L-serine and tRNA(Sec): step 1/1. Its function is as follows. Catalyzes the attachment of serine to tRNA(Ser). Is also able to aminoacylate tRNA(Sec) with serine, to form the misacylated tRNA L-seryl-tRNA(Sec), which will be further converted into selenocysteinyl-tRNA(Sec). In Levilactobacillus brevis (strain ATCC 367 / BCRC 12310 / CIP 105137 / JCM 1170 / LMG 11437 / NCIMB 947 / NCTC 947) (Lactobacillus brevis), this protein is Serine--tRNA ligase.